A 121-amino-acid chain; its full sequence is Large ribosomal subunit protein bL20 (121 aa).

The protein belongs to the bacterial ribosomal protein bL20 family.

Functionally, binds directly to 23S ribosomal RNA and is necessary for the in vitro assembly process of the 50S ribosomal subunit. It is not involved in the protein synthesizing functions of that subunit. This chain is Large ribosomal subunit protein bL20, found in Methylorubrum populi (strain ATCC BAA-705 / NCIMB 13946 / BJ001) (Methylobacterium populi).